We begin with the raw amino-acid sequence, 299 residues long: Pyrroline-5-carboxylate reductase 2 (299 aa).

It belongs to the pyrroline-5-carboxylate reductase family. As to quaternary structure, homodecamer; composed of 5 homodimers.

The enzyme catalyses L-proline + NADP(+) = (S)-1-pyrroline-5-carboxylate + NADPH + 2 H(+). It carries out the reaction L-proline + NAD(+) = (S)-1-pyrroline-5-carboxylate + NADH + 2 H(+). Its pathway is amino-acid biosynthesis; L-proline biosynthesis; L-proline from L-glutamate 5-semialdehyde: step 1/1. The sequence is that of Pyrroline-5-carboxylate reductase 2 (pycr2) from Dictyostelium discoideum (Social amoeba).